Here is a 317-residue protein sequence, read N- to C-terminus: MDCVTNATTRCRKGSIVVIVMPPLISNNTFFLMNTTNDGNGGSVSYDYPLLSNQNSLITNTTNNLTSDSTNTDISNETPILSNNTPILMNTPTNPNSDSDTTTPTVVSHTVELITEEKKVISKIVYSDGTEDVKELDLTDFYNSAYNEGYSAGVNSVDFSKTGYIIENGIIKVTTTLTNGKSQEYNITLDENLVVSLYNQIMANKSSCFQIRQNETEYSFLVESRQYQPQPNLAYQPAVDGTPVYEVLGQEQKTWSFTLYVDSIPKMQFLQQLASNPLIEVYFDEIGDWKQALIQSISLSRITTGHYYADIELIILE.

The segment covering 68 to 78 (DSTNTDISNET) has biased composition (low complexity). Positions 68-87 (DSTNTDISNETPILSNNTPI) are disordered.

This is an uncharacterized protein from Methanocaldococcus jannaschii (strain ATCC 43067 / DSM 2661 / JAL-1 / JCM 10045 / NBRC 100440) (Methanococcus jannaschii).